Here is a 125-residue protein sequence, read N- to C-terminus: RutC family protein aq_364 (125 aa).

Belongs to the RutC family.

This chain is RutC family protein aq_364, found in Aquifex aeolicus (strain VF5).